A 299-amino-acid chain; its full sequence is Protoheme IX farnesyltransferase (299 aa).

A run of 9 helical transmembrane segments spans residues 29–49 (VVTL…PGAV), 51–71 (LQPL…AAAM), 100–120 (HAAT…YWLV), 123–143 (LTAW…TAYL), 150–170 (NIVI…TAVT), 177–197 (GLLL…ALAI), 223–243 (CIFL…LVGM), 244–264 (SGAL…YKAW), and 275–295 (AMDV…LLLV).

The protein belongs to the UbiA prenyltransferase family. Protoheme IX farnesyltransferase subfamily.

It is found in the cell inner membrane. It catalyses the reaction heme b + (2E,6E)-farnesyl diphosphate + H2O = Fe(II)-heme o + diphosphate. It participates in porphyrin-containing compound metabolism; heme O biosynthesis; heme O from protoheme: step 1/1. Its function is as follows. Converts heme B (protoheme IX) to heme O by substitution of the vinyl group on carbon 2 of heme B porphyrin ring with a hydroxyethyl farnesyl side group. The protein is Protoheme IX farnesyltransferase of Shewanella amazonensis (strain ATCC BAA-1098 / SB2B).